Consider the following 158-residue polypeptide: MKCPFCGNADTQVVDSRVSEEGDTIRRRRRCLSCDKRFTTYERIELAMPSVVKRNGSRSDYDTAKLRASLSLALRKRPVSTDQVDSVVARIEETLLASGQREVSTERIGELVMAELKKLDKVGYVRFASVYKNFEDIGEFVDAIREMQGPMLPGKLRK.

A zinc finger spans residues 3–34 (CPFCGNADTQVVDSRVSEEGDTIRRRRRCLSC). Positions 49–139 (PSVVKRNGSR…VYKNFEDIGE (91 aa)) constitute an ATP-cone domain.

This sequence belongs to the NrdR family. The cofactor is Zn(2+).

Negatively regulates transcription of bacterial ribonucleotide reductase nrd genes and operons by binding to NrdR-boxes. The sequence is that of Transcriptional repressor NrdR from Bordetella petrii (strain ATCC BAA-461 / DSM 12804 / CCUG 43448).